Here is a 413-residue protein sequence, read N- to C-terminus: Multifunctional CCA protein (413 aa).

Glycine 8 and arginine 11 together coordinate ATP. CTP is bound by residues glycine 8 and arginine 11. Mg(2+) is bound by residues aspartate 21 and aspartate 23. ATP is bound by residues arginine 91, arginine 137, and arginine 140. CTP contacts are provided by arginine 91, arginine 137, and arginine 140. The region spanning 228–329 (TGIHTLMVLE…VKLFDKADLW (102 aa)) is the HD domain.

This sequence belongs to the tRNA nucleotidyltransferase/poly(A) polymerase family. Bacterial CCA-adding enzyme type 1 subfamily. In terms of assembly, monomer. Can also form homodimers and oligomers. Mg(2+) serves as cofactor. The cofactor is Ni(2+).

The catalysed reaction is a tRNA precursor + 2 CTP + ATP = a tRNA with a 3' CCA end + 3 diphosphate. It carries out the reaction a tRNA with a 3' CCA end + 2 CTP + ATP = a tRNA with a 3' CCACCA end + 3 diphosphate. In terms of biological role, catalyzes the addition and repair of the essential 3'-terminal CCA sequence in tRNAs without using a nucleic acid template. Adds these three nucleotides in the order of C, C, and A to the tRNA nucleotide-73, using CTP and ATP as substrates and producing inorganic pyrophosphate. tRNA 3'-terminal CCA addition is required both for tRNA processing and repair. Also involved in tRNA surveillance by mediating tandem CCA addition to generate a CCACCA at the 3' terminus of unstable tRNAs. While stable tRNAs receive only 3'-terminal CCA, unstable tRNAs are marked with CCACCA and rapidly degraded. In Shewanella loihica (strain ATCC BAA-1088 / PV-4), this protein is Multifunctional CCA protein.